Consider the following 1215-residue polypeptide: Cellulose synthase-like protein D4 (1215 aa).

Disordered regions lie at residues 24–46 (GGDA…SLGS) and 206–231 (SDTD…ERDQ). Over residues 207–222 (DTDESDSVTDDDDDEA) the composition is skewed to acidic residues. The next 2 membrane-spanning stretches (helical) occupy residues 321 to 341 (AILS…GFFL) and 352 to 372 (AVWL…SWLL). Active-site residues include Asp452 and Asp905. Transmembrane regions (helical) follow at residues 988 to 1008 (VFLL…KFIV), 1014 to 1034 (TFLA…LLEI), 1060 to 1080 (PAAV…SFTL), 1114 to 1134 (LMVP…VAAA), 1147 to 1167 (LLGG…FAKG), and 1177 to 1197 (TIVF…WVYI).

It belongs to the glycosyltransferase 2 family. Plant cellulose synthase-like D subfamily.

It is found in the golgi apparatus membrane. Its function is as follows. Thought to be a Golgi-localized beta-glycan synthase that polymerize the backbones of noncellulosic polysaccharides (hemicelluloses) of plant cell wall. In Oryza sativa subsp. japonica (Rice), this protein is Cellulose synthase-like protein D4 (CSLD4).